The following is a 224-amino-acid chain: Ankyrin repeat domain-containing protein 45 (224 aa).

ANK repeat units lie at residues V46 to E76 and R80 to A109.

As to expression, widely expressed.

It is found in the cytoplasm. It localises to the midbody. Its subcellular location is the midbody ring. The protein localises to the cleavage furrow. May play a role during cell division. This is Ankyrin repeat domain-containing protein 45 from Danio rerio (Zebrafish).